Here is a 142-residue protein sequence, read N- to C-terminus: Large ribosomal subunit protein uL16 (142 aa).

This sequence belongs to the universal ribosomal protein uL16 family. As to quaternary structure, part of the 50S ribosomal subunit.

Functionally, binds 23S rRNA and is also seen to make contacts with the A and possibly P site tRNAs. The chain is Large ribosomal subunit protein uL16 from Aquifex aeolicus (strain VF5).